A 967-amino-acid polypeptide reads, in one-letter code: RNA polymerase II C-terminal domain phosphatase-like 1 (967 aa).

The Nuclear localization signal (NLS) signature appears at 38–41 (RKKK). The 251-residue stretch at 151–401 (LNLRCLGIVF…TPVLCVARNV (251 aa)) folds into the FCP1 homology domain. Disordered stretches follow at residues 548 to 611 (SEPS…VQSR) and 643 to 712 (MEKH…RNSD). Pro residues predominate over residues 590-603 (PSEPSFPQRPPVQA). Residues 665 to 684 (RMLHENRRPPKESLRRDEQL) are compositionally biased toward basic and acidic residues. 2 DRBM domains span residues 724-792 (TETS…NLAD) and 855-925 (GSIT…SVRS). The interval 928–967 (GQPLHKRQGSPRSFGGMSNKRLKPDFQRSLQRMPSSGRYS) is disordered. The interval 945 to 967 (SNKRLKPDFQRSLQRMPSSGRYS) is required for nuclear localization (NLS). The Nuclear localization signal (NLS) motif lies at 947–951 (KRLKP). The segment covering 955-967 (RSLQRMPSSGRYS) has biased composition (polar residues).

In terms of assembly, interacts with FREE1, ANAC019, MYB3, MYB4 and MYB32. Binds to DMS3. Interacts with RCF3. Interacts with RS40 and RS41. Interacts with EIF4A3. Interacts with UPF3. It depends on Mg(2+) as a cofactor. Requires Co(2+) as cofactor. Mn(2+) serves as cofactor. In terms of tissue distribution, expressed at very low levels in roots, leaves, stems, flowers and siliques.

Its subcellular location is the nucleus. It is found in the nucleus speckle. It catalyses the reaction O-phospho-L-seryl-[protein] + H2O = L-seryl-[protein] + phosphate. The catalysed reaction is O-phospho-L-threonyl-[protein] + H2O = L-threonyl-[protein] + phosphate. In terms of biological role, processively dephosphorylates 'Ser-5' but not 'Ser-2' of the heptad repeats YSPTSPS in the C-terminal domain of the largest RNA polymerase II subunit (RPB1). This promotes the activity of RNA polymerase II. Together with CPL2, required for male gametes fertility. Multifunctional regulator that modulates plant growth, stress, and phytohormones responses. Negative regulator of stress gene transcription involved in abscisic acid (ABA) mediated and jasmonic acid (JA) mediated signaling pathways, NaCl, osmotic stress, wounding, and cold resistance. Negatively regulates the expression of jasmonic acid (JA) biosynthetic genes in response to wounding. Forms a complex with RCF3 that modulates co-transcriptional processes such as mRNA capping and polyadenylation, and functions to repress stress-inducible gene expression. Dephosphorylates RCF3. Involved in the dephosphorylation of EIF4A3. This dephosphorylation retains EIF4A3 in the nucleus and limits its accumulation in the cytoplasm. Is essential for the degradation of the nonsense-mediated mRNA decay (NMD) transcripts. This Arabidopsis thaliana (Mouse-ear cress) protein is RNA polymerase II C-terminal domain phosphatase-like 1.